The chain runs to 485 residues: Adenosylhomocysteinase 2 (485 aa).

Substrate is bound by residues Thr-64, Asp-139, and Glu-205. Position 206-208 (206-208 (TTT)) interacts with NAD(+). Substrate is bound by residues Lys-235 and Asp-239. Residues Asn-240, 269–274 (GYGDVG), Glu-292, Asn-327, 348–350 (IGH), and Asn-397 each bind NAD(+).

This sequence belongs to the adenosylhomocysteinase family. It depends on NAD(+) as a cofactor.

The catalysed reaction is S-adenosyl-L-homocysteine + H2O = L-homocysteine + adenosine. It participates in amino-acid biosynthesis; L-homocysteine biosynthesis; L-homocysteine from S-adenosyl-L-homocysteine: step 1/1. In terms of biological role, adenosylhomocysteine is a competitive inhibitor of S-adenosyl-L-methionine-dependent methyl transferase reactions; therefore adenosylhomocysteinase may play a key role in the control of methylations via regulation of the intracellular concentration of adenosylhomocysteine. In Arabidopsis thaliana (Mouse-ear cress), this protein is Adenosylhomocysteinase 2 (SAHH2).